A 359-amino-acid chain; its full sequence is Carbamoyl phosphate synthase arginine-specific small chain (359 aa).

The CPSase stretch occupies residues 1–168; it reads MKAYLVLATG…VETFEGNGPH (168 aa). L-glutamine is bound by residues serine 45, glycine 216, and glycine 218. The Glutamine amidotransferase type-1 domain occupies 168–355; it reads HIVLIDYGFK…IDDVAAKGRE (188 aa). Cysteine 243 acts as the Nucleophile in catalysis. L-glutamine is bound by residues leucine 244, glutamine 247, asparagine 285, and tyrosine 288. Catalysis depends on residues histidine 328 and glutamate 330.

Belongs to the CarA family. As to quaternary structure, composed of two chains; the small (or glutamine) chain promotes the hydrolysis of glutamine to ammonia, which is used by the large (or ammonia) chain to synthesize carbamoyl phosphate. Tetramer of heterodimers (alpha,beta)4.

The catalysed reaction is hydrogencarbonate + L-glutamine + 2 ATP + H2O = carbamoyl phosphate + L-glutamate + 2 ADP + phosphate + 2 H(+). It carries out the reaction L-glutamine + H2O = L-glutamate + NH4(+). It functions in the pathway amino-acid biosynthesis; L-arginine biosynthesis; carbamoyl phosphate from bicarbonate: step 1/1. Small subunit of the glutamine-dependent carbamoyl phosphate synthetase (CPSase). CPSase catalyzes the formation of carbamoyl phosphate from the ammonia moiety of glutamine, carbonate, and phosphate donated by ATP, constituting the first step of the biosynthetic pathway leading to arginine and/or urea. The small subunit (glutamine amidotransferase) binds and cleaves glutamine to supply the large subunit with the substrate ammonia. This is Carbamoyl phosphate synthase arginine-specific small chain from Halalkalibacterium halodurans (strain ATCC BAA-125 / DSM 18197 / FERM 7344 / JCM 9153 / C-125) (Bacillus halodurans).